We begin with the raw amino-acid sequence, 219 residues long: Large ribosomal subunit protein uL3 (219 aa).

The disordered stretch occupies residues 124-154 (FSGSIKRHNQSEGPKSHGSRYHRRPGSMGPI).

It belongs to the universal ribosomal protein uL3 family. As to quaternary structure, part of the 50S ribosomal subunit. Forms a cluster with proteins L14 and L19.

In terms of biological role, one of the primary rRNA binding proteins, it binds directly near the 3'-end of the 23S rRNA, where it nucleates assembly of the 50S subunit. The protein is Large ribosomal subunit protein uL3 of Phytoplasma mali (strain AT).